The sequence spans 495 residues: Alpha,alpha-trehalose-phosphate synthase [UDP-forming] 56 kDa subunit (495 aa).

2 residues coordinate D-glucose 6-phosphate: Tyr102 and Asp156. Arg293 and Lys298 together coordinate UDP. Positions 293 and 298 each coordinate UDP-alpha-D-glucose. Residue Arg331 coordinates D-glucose 6-phosphate. UDP-binding positions include Ile370 and 396–400; that span reads LVSYE. Residues Ile370 and 392–400 each bind UDP-alpha-D-glucose; that span reads DGMNLVSYE.

It belongs to the glycosyltransferase 20 family. In terms of assembly, the trehalose synthase complex is composed of the two catalytic subunits TPS1 and TPS2 and at least one of the two regulatory subunits TPS3 or TSL1.

It is found in the cytoplasm. It carries out the reaction D-glucose 6-phosphate + UDP-alpha-D-glucose = alpha,alpha-trehalose 6-phosphate + UDP + H(+). It functions in the pathway carbohydrate biosynthesis. Its activity is regulated as follows. Activated by fructose 6-phosphate. Inorganic phosphate inhibits the synthase activity in the complex, but activates the synthase activity in the free monomeric form. Synthase catalytic subunit of the trehalose synthase complex that catalyzes the production of trehalose from glucose-6-phosphate and UDP-alpha-D-glucose in a two step process. Can function independently of the complex. This Saccharomyces cerevisiae (strain ATCC 204508 / S288c) (Baker's yeast) protein is Alpha,alpha-trehalose-phosphate synthase [UDP-forming] 56 kDa subunit.